The chain runs to 75 residues: MSRFFRRRKFCRFTAEGVKQIDYKDLETLKAYISETGKIVPSRITGTKAKYQRQLATAVKRARYLALLPYTDSHE.

Belongs to the bacterial ribosomal protein bS18 family. In terms of assembly, part of the 30S ribosomal subunit. Forms a tight heterodimer with protein bS6.

In terms of biological role, binds as a heterodimer with protein bS6 to the central domain of the 16S rRNA, where it helps stabilize the platform of the 30S subunit. The sequence is that of Small ribosomal subunit protein bS18 from Teredinibacter turnerae (strain ATCC 39867 / T7901).